A 653-amino-acid chain; its full sequence is Fusexin 1 (653 aa).

The N-terminal stretch at 1-24 (MKRVGNCWKASVAAFFLLMFTAFA) is a signal peptide. At 25 to 559 (AADTTSVDTV…FENIWSGDAN (535 aa)) the chain is on the extracellular side. 4 cysteine pairs are disulfide-bonded: cysteine 129–cysteine 167, cysteine 398–cysteine 441, cysteine 468–cysteine 487, and cysteine 499–cysteine 516. The tract at residues 155–160 (DYWTGS) is fusion loop. A helical membrane pass occupies residues 560-580 (ALNWLQVFVTFIAFLGGFALV). The Cytoplasmic segment spans residues 581–604 (GVKLGKIVDGLATEFIPVKDSHVR). 2 consecutive transmembrane segments (helical) span residues 605 to 625 (LVIGLLGGGMIATAVYQLVTD) and 626 to 646 (PLGLLVTVLGLVVMGYLYLSA). The Cytoplasmic segment spans residues 647–653 (SAPEINL).

The protein belongs to the HAP2/GCS1 family. Fusexin 1 subfamily. As to quaternary structure, homotrimer stabilized by interdomain contacts and numerous Ca(2+) and Na(+) ions.

The protein localises to the cell surface. It is found in the cell membrane. Its function is as follows. Exhibits fusogenic activity. Mediates cell-cell fusion in mammalian cells (bilateral fusion). This is Fusexin 1 from Haloplanus natans (strain DSM 17983 / JCM 14081 / CGMCC 1.8972 / RE-101).